Consider the following 298-residue polypeptide: Protease HtpX homolog (298 aa).

The next 2 helical transmembrane spans lie at 14–34 and 39–59; these read VVLL…AGYL and YAMG…SMIF. Residue histidine 143 participates in Zn(2+) binding. Glutamate 144 is an active-site residue. Residue histidine 147 participates in Zn(2+) binding. A run of 2 helical transmembrane segments spans residues 158-178 and 197-217; these read IAVA…RMLW and IITL…ASLI. Glutamate 226 provides a ligand contact to Zn(2+).

Belongs to the peptidase M48B family. Zn(2+) is required as a cofactor.

Its subcellular location is the cell membrane. This Streptococcus pyogenes serotype M3 (strain SSI-1) protein is Protease HtpX homolog.